Here is a 77-residue protein sequence, read N- to C-terminus: Large ribosomal subunit protein uL24 (77 aa).

This sequence belongs to the universal ribosomal protein uL24 family. As to quaternary structure, part of the 50S ribosomal subunit.

Its function is as follows. One of two assembly initiator proteins, it binds directly to the 5'-end of the 23S rRNA, where it nucleates assembly of the 50S subunit. In terms of biological role, one of the proteins that surrounds the polypeptide exit tunnel on the outside of the subunit. The polypeptide is Large ribosomal subunit protein uL24 (Campylobacter jejuni subsp. doylei (strain ATCC BAA-1458 / RM4099 / 269.97)).